Here is a 196-residue protein sequence, read N- to C-terminus: Nucleoside triphosphate pyrophosphatase (196 aa).

The active-site Proton acceptor is the Asp73.

This sequence belongs to the Maf family. It depends on a divalent metal cation as a cofactor.

It localises to the cytoplasm. It catalyses the reaction a ribonucleoside 5'-triphosphate + H2O = a ribonucleoside 5'-phosphate + diphosphate + H(+). It carries out the reaction a 2'-deoxyribonucleoside 5'-triphosphate + H2O = a 2'-deoxyribonucleoside 5'-phosphate + diphosphate + H(+). Its function is as follows. Nucleoside triphosphate pyrophosphatase. May have a dual role in cell division arrest and in preventing the incorporation of modified nucleotides into cellular nucleic acids. This Maricaulis maris (strain MCS10) (Caulobacter maris) protein is Nucleoside triphosphate pyrophosphatase.